The primary structure comprises 430 residues: Histidine--tRNA ligase (430 aa).

This sequence belongs to the class-II aminoacyl-tRNA synthetase family. As to quaternary structure, homodimer.

The protein resides in the cytoplasm. It catalyses the reaction tRNA(His) + L-histidine + ATP = L-histidyl-tRNA(His) + AMP + diphosphate + H(+). The chain is Histidine--tRNA ligase from Lactococcus lactis subsp. cremoris (strain SK11).